The sequence spans 411 residues: MAFSFDLAVILQRERRRTKRRRRDLCKSRQPIPEIPFDLVIEILTRLPAKSLMRFKSVSKLWSSLICSRNFTNRLLKLSSPPRLFMCLSSSDNSHLKTVLLSLSSPPDSDITMSSSVIDQDLTMPGMKGYQISHVFRGLMCLVKKSSAQIYNTTTRQLVVLPDIEESTILAEEHKSKKIMYHIGHDPVYDQYKVVCIVSRASDEVEEYTFLSEHWVLLLEGEGSRRWRKISCKYPPHVPLGQGLTLSGRMHYLAWVRVSDNRVLVIFDTHSEEFSMLQVPGDIFWKYNGLLEYGGKIAILNYTKVDIEGVMELWVVEDEEKNLWSSKILVVNPLQLQMVNSIISLTVLGTTRNGEVILVPGPEDKTVFNILLYDLQKNHIRKIEIKGGPDRYLNNIWEVVGMDDVENLMYL.

The 47-residue stretch at 29–75 (RQPIPEIPFDLVIEILTRLPAKSLMRFKSVSKLWSSLICSRNFTNRL) folds into the F-box domain.

The polypeptide is F-box protein At4g19940 (Arabidopsis thaliana (Mouse-ear cress)).